We begin with the raw amino-acid sequence, 705 residues long: Frizzled-4 (705 aa).

Residues 1–22 form the signal peptide; sequence MKPTCILCLLVVILLHPRISKS. The span at 21–37 shows a compositional bias: low complexity; the sequence is KSSTSGNPSASSSSSSP. A disordered region spans residues 21–40; that stretch reads KSSTSGNPSASSSSSSPPEI. Topologically, residues 23 to 233 are extracellular; sequence STSGNPSASS…FTPAEKHLAE (211 aa). An FZ domain is found at 41–163; that stretch reads PAFRQCETIR…NNHETMCMEG (123 aa). Intrachain disulfides connect Cys46/Cys107, Cys54/Cys100, Cys91/Cys130, Cys119/Cys160, and Cys123/Cys147. A glycan (N-linked (GlcNAc...) asparagine) is linked at Asn60. A helical transmembrane segment spans residues 234–254; it reads IWVSTWAYAALGLALVATVCL. Topologically, residues 255 to 270 are cytoplasmic; sequence LASDGSRLASAKWSRL. Residues 271–291 traverse the membrane as a helical segment; the sequence is LSPLIWCHNMVTLGWAVRFMV. The Extracellular segment spans residues 292 to 322; the sequence is GRTGTACGTDPQAPNESLLTVDGLSNASCAS. N-linked (GlcNAc...) asparagine glycosylation is found at Asn306 and Asn317. Residues 323–343 form a helical membrane-spanning segment; it reads VFLMRYYFGMAACAWWAVLCL. Residues 344–386 lie on the Cytoplasmic side of the membrane; the sequence is GWHRDIRRHSPDSKGHVVIPSNFGGSPAKRNSAKTAQQDLTQN. A helical transmembrane segment spans residues 387–407; sequence NFVCFVAWGLPAFQTSAVIVA. Topologically, residues 408 to 430 are extracellular; it reads RFVDADELLGACFVGNQSDKALQ. The N-linked (GlcNAc...) asparagine glycan is linked to Asn423. A helical membrane pass occupies residues 431 to 451; sequence ILVATPVFCYWIFGSMNLISG. The Cytoplasmic segment spans residues 452 to 483; the sequence is YLVHCRTKEILRNSNALSVQQQLQQLSAHSSS. A helical transmembrane segment spans residues 484–504; sequence GIGIFLFIYGLACAMLLLAVI. The Extracellular segment spans residues 505-529; the sequence is YEFANIDVWLGSGDTNTPLWPFLLR. A helical transmembrane segment spans residues 530–550; that stretch reads AFMELMLGICCFAWVLGPSIS. Residues 551–705 lie on the Cytoplasmic side of the membrane; that stretch reads TLYKRQVSNG…LQQYGNETLL (155 aa). Residues 635–681 are disordered; it reads RSVHHQQRHSPHHHHHQQQQHHQFHPHHNHQHHSTSSHRLYYPPGSY. A compositionally biased stretch (basic residues) spans 636–670; it reads SVHHQQRHSPHHHHHQQQQHHQFHPHHNHQHHSTS. Residues 703 to 705 carry the PDZ-binding motif; the sequence is TLL.

Belongs to the G-protein coupled receptor Fz/Smo family.

The protein resides in the membrane. Functionally, receptor for Wnt proteins. Most of frizzled receptors are coupled to the beta-catenin canonical signaling pathway, which leads to the activation of disheveled proteins, inhibition of GSK-3 kinase, nuclear accumulation of beta-catenin and activation of Wnt target genes. A second signaling pathway involving PKC and calcium fluxes has been seen for some family members, but it is not yet clear if it represents a distinct pathway or if it can be integrated in the canonical pathway, as PKC seems to be required for Wnt-mediated inactivation of GSK-3 kinase. Both pathways seem to involve interactions with G-proteins. May be involved in transduction and intercellular transmission of polarity information during tissue morphogenesis and/or in differentiated tissues. Required to coordinate the cytoskeletons of epidermal cells to produce a parallel array of cuticular hairs and bristles. In Drosophila melanogaster (Fruit fly), this protein is Frizzled-4 (fz4).